Reading from the N-terminus, the 275-residue chain is 2-C-methyl-D-erythritol 4-phosphate cytidylyltransferase (275 aa).

Belongs to the IspD/TarI cytidylyltransferase family. IspD subfamily.

The enzyme catalyses 2-C-methyl-D-erythritol 4-phosphate + CTP + H(+) = 4-CDP-2-C-methyl-D-erythritol + diphosphate. It participates in isoprenoid biosynthesis; isopentenyl diphosphate biosynthesis via DXP pathway; isopentenyl diphosphate from 1-deoxy-D-xylulose 5-phosphate: step 2/6. Its function is as follows. Catalyzes the formation of 4-diphosphocytidyl-2-C-methyl-D-erythritol from CTP and 2-C-methyl-D-erythritol 4-phosphate (MEP). This Corynebacterium jeikeium (strain K411) protein is 2-C-methyl-D-erythritol 4-phosphate cytidylyltransferase.